A 275-amino-acid chain; its full sequence is Phosphate import ATP-binding protein PstB 3 (275 aa).

Residues 1 to 26 (MATQETDDSLISTDVQTDATERGDQP) are disordered. Residues 9-18 (SLISTDVQTD) are compositionally biased toward polar residues. The region spanning 31–270 (VETKHLDVHY…PEDDRVEDYI (240 aa)) is the ABC transporter domain. 63-70 (GPSGCGKS) provides a ligand contact to ATP.

The protein belongs to the ABC transporter superfamily. Phosphate importer (TC 3.A.1.7) family. In terms of assembly, the complex is composed of two ATP-binding proteins (PstB), two transmembrane proteins (PstC and PstA) and a solute-binding protein (PstS).

The protein localises to the cell membrane. It carries out the reaction phosphate(out) + ATP + H2O = ADP + 2 phosphate(in) + H(+). Its function is as follows. Part of the ABC transporter complex PstSACB involved in phosphate import. Responsible for energy coupling to the transport system. In Natronomonas pharaonis (strain ATCC 35678 / DSM 2160 / CIP 103997 / JCM 8858 / NBRC 14720 / NCIMB 2260 / Gabara) (Halobacterium pharaonis), this protein is Phosphate import ATP-binding protein PstB 3.